The primary structure comprises 401 residues: Tyrosine--tRNA ligase (401 aa).

The short motif at 45-54 is the 'HIGH' region element; that stretch reads PTAPDLHLGH. A 'KMSKS' region motif is present at residues 230–234; sequence KMSKS. An ATP-binding site is contributed by Lys-233. The S4 RNA-binding domain maps to 339 to 399; that stretch reads IWLAKALVEC…GKRKFAKLKV (61 aa).

It belongs to the class-I aminoacyl-tRNA synthetase family. TyrS type 2 subfamily. Homodimer.

The protein resides in the cytoplasm. It carries out the reaction tRNA(Tyr) + L-tyrosine + ATP = L-tyrosyl-tRNA(Tyr) + AMP + diphosphate + H(+). Catalyzes the attachment of tyrosine to tRNA(Tyr) in a two-step reaction: tyrosine is first activated by ATP to form Tyr-AMP and then transferred to the acceptor end of tRNA(Tyr). The protein is Tyrosine--tRNA ligase of Campylobacter jejuni (strain RM1221).